The following is a 515-amino-acid chain: UDP-glucosyltransferase 2 (515 aa).

The N-terminal stretch at Met1–Gly20 is a signal peptide. The Lumenal segment spans residues Ala21–Gln471. Residues Asn51, Asn236, and Asn303 are each glycosylated (N-linked (GlcNAc...) asparagine). The helical transmembrane segment at Tyr472–Val492 threads the bilayer. The Cytoplasmic portion of the chain corresponds to Lys493–Asn515.

This sequence belongs to the UDP-glycosyltransferase family. Post-translationally, glycosylated.

It localises to the endoplasmic reticulum membrane. It catalyses the reaction kermesate + UDP-alpha-D-glucose = carminate + UDP + 2 H(+). The enzyme catalyses flavokermesate + UDP-alpha-D-glucose = flavokermesate 7-C-beta-D-glucoside + UDP + 2 H(+). Membrane-bound UDP-glucosyltransferase (UGT) which catalyzes the C-glucosylation of kermesate and flavokermesate to produce carminate and flavokermesate 7-C-beta-D-glucoside (dcll) respectively. Carminate is used as a deterrent against insect predators. This chain is UDP-glucosyltransferase 2, found in Dactylopius coccus (Cochineal).